The following is a 207-amino-acid chain: Small ribosomal subunit protein uS4 (207 aa).

Positions 97–160 (SRLDNVVYRM…KKQARIVEAL (64 aa)) constitute an S4 RNA-binding domain.

Belongs to the universal ribosomal protein uS4 family. In terms of assembly, part of the 30S ribosomal subunit. Contacts protein S5. The interaction surface between S4 and S5 is involved in control of translational fidelity.

In terms of biological role, one of the primary rRNA binding proteins, it binds directly to 16S rRNA where it nucleates assembly of the body of the 30S subunit. Functionally, with S5 and S12 plays an important role in translational accuracy. In Burkholderia mallei (strain NCTC 10247), this protein is Small ribosomal subunit protein uS4.